Here is a 146-residue protein sequence, read N- to C-terminus: Protein MucA (146 aa).

Residues Ser-62 and Lys-99 each act as for autocatalytic cleavage activity in the active site.

It belongs to the peptidase S24 family.

Functionally, involved in UV protection and mutation. The protein is Protein MucA (mucA) of Escherichia coli.